The primary structure comprises 158 residues: Transcription elongation factor GreA (158 aa).

Positions 24 to 43 (DVERPKASEAIGEARDKGDL) are enriched in basic and acidic residues. The segment at 24–47 (DVERPKASEAIGEARDKGDLSENA) is disordered. Residues 48 to 68 (EYDAAKEAQGLLEMKISKMEE) are a coiled coil.

The protein belongs to the GreA/GreB family.

Functionally, necessary for efficient RNA polymerase transcription elongation past template-encoded arresting sites. The arresting sites in DNA have the property of trapping a certain fraction of elongating RNA polymerases that pass through, resulting in locked ternary complexes. Cleavage of the nascent transcript by cleavage factors such as GreA or GreB allows the resumption of elongation from the new 3'terminus. GreA releases sequences of 2 to 3 nucleotides. The protein is Transcription elongation factor GreA of Christiangramia forsetii (strain DSM 17595 / CGMCC 1.15422 / KT0803) (Gramella forsetii).